Here is a 61-residue protein sequence, read N- to C-terminus: Sperm protamine P1 (61 aa).

Residues 1-61 (MARYRHSRSR…RRYSRRRRRY (61 aa)) form a disordered region.

The protein belongs to the protamine P1 family. Testis.

The protein resides in the nucleus. The protein localises to the chromosome. In terms of biological role, protamines substitute for histones in the chromatin of sperm during the haploid phase of spermatogenesis. They compact sperm DNA into a highly condensed, stable and inactive complex. This Macropus giganteus (Eastern gray kangaroo) protein is Sperm protamine P1 (PRM1).